The chain runs to 450 residues: MKKGLVVDLSKAAPYLKSHEVAYMQETINQAHNKLHNGTGAGNDFLGWVDLPVNYDKDEFARIKEAAKKIQSDSDVLVVIGIGGSYLGARAAIEMLTNNFYNSMSKDKRKTPAIFYAGNNISSSYMADLLKAIDGLDVSLNVISKSGTTTEPAIAFRILKDYMEKKYGKEEAKKRIYATTDAKKGALKTLADAEGYETFVIPDDVGGRFSVLTAVGLLPIAAAGINIDEMMEGAADAREEYANPSLADNECYKYAAARNALYNKGKAIEILVNYEPSVHYFNEWWKQLYGESEGKDNKGLFPAAVDFSTDLHSMGQYIQEGRRDIFETVINVGSPREEIVIEVNDENIDGLNFLAGKTMDYVNKQAFRGTLLAHNDGEVPNLVVNVPELTPYYFGRLVYFFEKACGISGYVLGINPFDQPGVEAYKKNMFALLGKPGFEDLKAELEERLK.

Glu291 (proton donor) is an active-site residue. Residues His312 and Lys426 contribute to the active site.

Belongs to the GPI family.

It localises to the cytoplasm. The catalysed reaction is alpha-D-glucose 6-phosphate = beta-D-fructose 6-phosphate. It participates in carbohydrate biosynthesis; gluconeogenesis. The protein operates within carbohydrate degradation; glycolysis; D-glyceraldehyde 3-phosphate and glycerone phosphate from D-glucose: step 2/4. Catalyzes the reversible isomerization of glucose-6-phosphate to fructose-6-phosphate. This Clostridium perfringens (strain SM101 / Type A) protein is Glucose-6-phosphate isomerase.